Here is a 398-residue protein sequence, read N- to C-terminus: Dual specificity mitogen-activated protein kinase kinase 2 (398 aa).

Residues 1 to 29 are disordered; that stretch reads MPAKRKPVLPALTITPSPAEGPGPGGSAE. The 298-residue stretch at 70 to 367 folds into the Protein kinase domain; sequence FERISELGAG…LKMLMNHTFI (298 aa). ATP is bound by residues 76–84 and Lys-99; that span reads LGAGNGGVV. Asp-192 (proton acceptor) is an active-site residue. Ser-220 and Ser-224 each carry phosphoserine; by RAF.

The protein belongs to the protein kinase superfamily. STE Ser/Thr protein kinase family. MAP kinase kinase subfamily. Activated by phosphorylation on Ser/Thr catalyzed by MAP kinase kinase kinases (RAF).

It catalyses the reaction L-seryl-[protein] + ATP = O-phospho-L-seryl-[protein] + ADP + H(+). The enzyme catalyses L-threonyl-[protein] + ATP = O-phospho-L-threonyl-[protein] + ADP + H(+). It carries out the reaction L-tyrosyl-[protein] + ATP = O-phospho-L-tyrosyl-[protein] + ADP + H(+). Functionally, catalyzes the concomitant phosphorylation of a threonine and a tyrosine residue in a Thr-Glu-Tyr sequence located in MAP kinases. Activates the ERK1 and ERK2 MAP kinases. The sequence is that of Dual specificity mitogen-activated protein kinase kinase 2 (MAP2K2) from Gallus gallus (Chicken).